A 382-amino-acid polypeptide reads, in one-letter code: Toluene efflux pump periplasmic linker protein TtgD (382 aa).

The N-terminal stretch at 1 to 23 is a signal peptide; it reads MRLERALRARQLIPLAAIWLLVG. Cys24 is lipidated: N-palmitoyl cysteine. Cys24 carries S-diacylglycerol cysteine lipidation. A coiled-coil region spans residues 100–136; sequence YEALLARAEASLLTAQNLARRYERLLDTNAISQQQYD.

This sequence belongs to the membrane fusion protein (MFP) (TC 8.A.1) family.

It localises to the cell inner membrane. In terms of biological role, the periplasmic linker protein component of an inducible organic solvent efflux pump. Involved in export of toluene and styrene but not of m-xylene, propylbenzene or ethylbenzene. Is not involved in antibiotic or AMP efflux. This Pseudomonas putida (strain DOT-T1E) protein is Toluene efflux pump periplasmic linker protein TtgD (ttgD).